A 164-amino-acid chain; its full sequence is Ribosome maturation factor RimP (164 aa).

It belongs to the RimP family.

The protein resides in the cytoplasm. Its function is as follows. Required for maturation of 30S ribosomal subunits. This is Ribosome maturation factor RimP from Mesoplasma florum (strain ATCC 33453 / NBRC 100688 / NCTC 11704 / L1) (Acholeplasma florum).